The primary structure comprises 346 residues: Fe(3+) ions import ATP-binding protein FbpC 2 (346 aa).

An ABC transporter domain is found at 2 to 234; sequence LELHRVSKSF…PNSEDIATFL (233 aa). 34-41 is a binding site for ATP; sequence GPSGSGKT.

Belongs to the ABC transporter superfamily. Fe(3+) ion importer (TC 3.A.1.10) family. As to quaternary structure, the complex is composed of two ATP-binding proteins (FbpC), two transmembrane proteins (FbpB) and a solute-binding protein (FbpA).

Its subcellular location is the cell inner membrane. It catalyses the reaction Fe(3+)(out) + ATP + H2O = Fe(3+)(in) + ADP + phosphate + H(+). Part of the ABC transporter complex FbpABC involved in Fe(3+) ions import. Responsible for energy coupling to the transport system. In Pectobacterium atrosepticum (strain SCRI 1043 / ATCC BAA-672) (Erwinia carotovora subsp. atroseptica), this protein is Fe(3+) ions import ATP-binding protein FbpC 2.